The chain runs to 375 residues: Aminomethyltransferase (375 aa).

Belongs to the GcvT family. The glycine cleavage system is composed of four proteins: P, T, L and H.

The catalysed reaction is N(6)-[(R)-S(8)-aminomethyldihydrolipoyl]-L-lysyl-[protein] + (6S)-5,6,7,8-tetrahydrofolate = N(6)-[(R)-dihydrolipoyl]-L-lysyl-[protein] + (6R)-5,10-methylene-5,6,7,8-tetrahydrofolate + NH4(+). Functionally, the glycine cleavage system catalyzes the degradation of glycine. The protein is Aminomethyltransferase of Ralstonia pickettii (strain 12J).